We begin with the raw amino-acid sequence, 826 residues long: Putative ankyrin repeat protein RBE_0220 (826 aa).

ANK repeat units lie at residues 308-337 (LGTS…DQHA), 342-371 (IDMS…DPNY), 375-404 (DNDT…DPNK), 445-474 (NDFT…DVNA), 478-507 (DGFT…NPDV), 512-541 (TKSS…NPNL), 545-574 (DGTT…DINK), and 578-607 (NGDN…DLKK).

This chain is Putative ankyrin repeat protein RBE_0220, found in Rickettsia bellii (strain RML369-C).